Reading from the N-terminus, the 340-residue chain is Uroporphyrinogen decarboxylase (340 aa).

Substrate contacts are provided by residues 23-27 (RQAGR), Asp72, Tyr147, Thr202, and His316.

This sequence belongs to the uroporphyrinogen decarboxylase family. In terms of assembly, homodimer.

The protein localises to the cytoplasm. It carries out the reaction uroporphyrinogen III + 4 H(+) = coproporphyrinogen III + 4 CO2. The protein operates within porphyrin-containing compound metabolism; protoporphyrin-IX biosynthesis; coproporphyrinogen-III from 5-aminolevulinate: step 4/4. Catalyzes the decarboxylation of four acetate groups of uroporphyrinogen-III to yield coproporphyrinogen-III. This chain is Uroporphyrinogen decarboxylase, found in Geobacter sulfurreducens (strain ATCC 51573 / DSM 12127 / PCA).